A 165-amino-acid polypeptide reads, in one-letter code: Cytochrome c-type biogenesis protein CcmE (165 aa).

Residues 1–7 (MTRKQRR) lie on the Cytoplasmic side of the membrane. A helical; Signal-anchor for type II membrane protein transmembrane segment spans residues 8-28 (LMMIGGAGVVLVVAVGLVLNA). Topologically, residues 29-165 (MRGSIVFFST…ASADAMRPAR (137 aa)) are periplasmic. Residues histidine 122 and tyrosine 126 each contribute to the heme site. The segment covering 138-149 (QGHWKDDYEKKP) has biased composition (basic and acidic residues). The segment at 138-165 (QGHWKDDYEKKPPGPGAAASADAMRPAR) is disordered. Residues 153 to 165 (GAAASADAMRPAR) are compositionally biased toward low complexity.

This sequence belongs to the CcmE/CycJ family.

The protein resides in the cell inner membrane. Its function is as follows. Heme chaperone required for the biogenesis of c-type cytochromes. Transiently binds heme delivered by CcmC and transfers the heme to apo-cytochromes in a process facilitated by CcmF and CcmH. This is Cytochrome c-type biogenesis protein CcmE from Rhodopseudomonas palustris (strain HaA2).